A 181-amino-acid chain; its full sequence is Large ribosomal subunit protein uL5 (181 aa).

Belongs to the universal ribosomal protein uL5 family. In terms of assembly, part of the 50S ribosomal subunit; part of the 5S rRNA/L5/L18/L25 subcomplex. Contacts the 5S rRNA and the P site tRNA. Forms a bridge to the 30S subunit in the 70S ribosome.

Functionally, this is one of the proteins that bind and probably mediate the attachment of the 5S RNA into the large ribosomal subunit, where it forms part of the central protuberance. In the 70S ribosome it contacts protein S13 of the 30S subunit (bridge B1b), connecting the 2 subunits; this bridge is implicated in subunit movement. Contacts the P site tRNA; the 5S rRNA and some of its associated proteins might help stabilize positioning of ribosome-bound tRNAs. This Campylobacter jejuni subsp. doylei (strain ATCC BAA-1458 / RM4099 / 269.97) protein is Large ribosomal subunit protein uL5.